The sequence spans 547 residues: Puff-specific protein Bx42 (547 aa).

The SNW stretch occupies residues 177–343 (AQYIRYTPSQ…AREERAGLRN (167 aa)). Phosphoserine occurs at positions 227 and 235. 2 disordered regions span residues 333–398 (RARE…ERDI) and 486–547 (QFSG…SKRD). 2 stretches are compositionally biased toward basic and acidic residues: residues 358–398 (EVRE…ERDI) and 526–539 (KRAE…SSHS).

It belongs to the SNW family.

The protein localises to the nucleus. In terms of biological role, may play a role in chromatin structure and function. In Drosophila melanogaster (Fruit fly), this protein is Puff-specific protein Bx42 (Bx42).